A 265-amino-acid polypeptide reads, in one-letter code: Hemin import ATP-binding protein HmuV (265 aa).

The 237-residue stretch at 13 to 249 (LKASNLHLQL…TAVENVYGWP (237 aa)) folds into the ABC transporter domain. 45–52 (GPNGAGKS) contacts ATP.

The protein belongs to the ABC transporter superfamily. Heme (hemin) importer (TC 3.A.1.14.5) family. As to quaternary structure, the complex is composed of two ATP-binding proteins (HmuV), two transmembrane proteins (HmuU) and a solute-binding protein (HmuT).

The protein localises to the cell inner membrane. Its function is as follows. Part of the ABC transporter complex HmuTUV involved in hemin import. Responsible for energy coupling to the transport system. The chain is Hemin import ATP-binding protein HmuV from Photobacterium damselae subsp. damselae (Listonella damsela).